We begin with the raw amino-acid sequence, 240 residues long: Protein FANTASTIC FOUR 2 (240 aa).

2 disordered regions span residues T89 to K124 and L177 to L229. Residues N117–L171 form the FAF domain. A compositionally biased stretch (acidic residues) spans E184 to E200. The segment covering G207–R216 has biased composition (basic residues). Residues R217–K226 are compositionally biased toward basic and acidic residues.

This sequence belongs to the fantastic four family. Expressed in the shoot apex, stamens, carpels and young siliques. Detected in provascular and vascular tissue, and in the center of the vegetative and inflorescence meristems. Expressed in the funiculus. In roots and leaves, predominantly expressed in phloem.

Its function is as follows. Regulates the size of the shoot meristem by modulating the CLV3-WUS feedback loop. Can repress WUS but is under negative control by CLV3. The polypeptide is Protein FANTASTIC FOUR 2 (FAF2) (Arabidopsis thaliana (Mouse-ear cress)).